The chain runs to 347 residues: Purine-rich element-binding protein gamma (347 aa).

Disordered regions lie at residues 1–34 (MERA…YPQA) and 133–169 (GHRQ…HPHS). The segment covering 9 to 24 (GGGGRGRGGKNVGGSG) has biased composition (gly residues). A DNA-binding region spans residues 51–293 (AGGAAEIQEL…GIFLKVSEVR (243 aa)). Positions 134 to 146 (HRQEHGHSKEQGS) are enriched in basic and acidic residues. Ser-160, Ser-163, and Ser-339 each carry phosphoserine.

It belongs to the PUR DNA-binding protein family. In terms of tissue distribution, isoform 1 is expressed in testis and glioblastoma. Isoform 2 is expressed in fetal lung.

The protein localises to the nucleus. This is Purine-rich element-binding protein gamma (PURG) from Homo sapiens (Human).